The following is a 205-amino-acid chain: Large ribosomal subunit protein bL25 (205 aa).

The protein belongs to the bacterial ribosomal protein bL25 family. CTC subfamily. Part of the 50S ribosomal subunit; part of the 5S rRNA/L5/L18/L25 subcomplex. Contacts the 5S rRNA. Binds to the 5S rRNA independently of L5 and L18.

Its function is as follows. This is one of the proteins that binds to the 5S RNA in the ribosome where it forms part of the central protuberance. The polypeptide is Large ribosomal subunit protein bL25 (Stutzerimonas stutzeri (strain A1501) (Pseudomonas stutzeri)).